Reading from the N-terminus, the 959-residue chain is MTESGSYKDTVNLPKTSFDMRANAIKREPEIQKFWEENKIYDRLFENNPGELFILHDGPPYANGSLHIGHALNKILKDIINRYQMLRGRKVRYVPGWDCHGLPIELKVLQNMKSAERQNLTPLQLRQKAKEFGLATVDNQRQNFKRYGIWGDWDNPYLTLKPEYEAAQIGVFGQMFLKGYIYRGLKPVHWSPSSKTALAEAELEYPEGHVSRSIYAAFPVTSLAEAVKPLLAEYQSDLGVAIWTTTPWTIPGNLAVAVNADLNYAVVEVSQSEAQSKFKYLIVAADLVERLSSTLGLELTLKATFKGNDLEHTTYRHPLFDRESPIVVGGDYITTESGTGLVHTAPGHGQEDYIVGQRYGLPILAPVDDNGNFTQEAGEFAGLNVLGDGNQAVIDALAAAGSLLKEEPYPHKYPYDWRTKKPTIFRATEQWFASVEGFREEALKAIATVKWIPAQGENRITPMVAERSDWCISRQRSWGVPIPVFYDEATGEPLLNEEIINHVQGIIAEKGSDAWWELSVEELLPESYRQNGKSYRRGTDTMDVWFDSGSSWASVVQQRPELRYPADIYLEGSDQHRGWFQSSLLTSVAVNDIAPYKTVLTHGFALDEQGRKMSKSEGNVVDPNTIIEGGKNQKVEPAYGADVLRLWVSSVDYSGDVRIGKNIIKQMNDVRGKIRNTARFLLGSLDDFDPEKDTVPFEELPELDRYMLHRITEVFEEVTEAFESFQFFRFFQTVQNFCVVDLSNFYLDVAKDRLYISAKDAFRRRSCQTVLKIALDNLARAIAPVLSHTAEDIWQYLPYKTPYKSVFEAGWVQVEEKWRNPELAEFWSELRKIRDKVNKTLEIYRLQKTIGSSLEAKVVVHVFDERLRQRLQALNPNTHGSVEKSNGVDELRYLFLASQVEVPSEPIFEEGDDAGIYIQVYKADGEKCDRCWNYSTHVGESAEHPLICERCVAALAGEF.

Residues P60 to H70 carry the 'HIGH' region motif. E571 contributes to the L-isoleucyl-5'-AMP binding site. The 'KMSKS' region motif lies at K612–S616. Residue K615 participates in ATP binding. Positions 928, 931, 948, and 951 each coordinate Zn(2+).

The protein belongs to the class-I aminoacyl-tRNA synthetase family. IleS type 1 subfamily. As to quaternary structure, monomer. Zn(2+) is required as a cofactor.

Its subcellular location is the cytoplasm. The enzyme catalyses tRNA(Ile) + L-isoleucine + ATP = L-isoleucyl-tRNA(Ile) + AMP + diphosphate. In terms of biological role, catalyzes the attachment of isoleucine to tRNA(Ile). As IleRS can inadvertently accommodate and process structurally similar amino acids such as valine, to avoid such errors it has two additional distinct tRNA(Ile)-dependent editing activities. One activity is designated as 'pretransfer' editing and involves the hydrolysis of activated Val-AMP. The other activity is designated 'posttransfer' editing and involves deacylation of mischarged Val-tRNA(Ile). This chain is Isoleucine--tRNA ligase, found in Nostoc punctiforme (strain ATCC 29133 / PCC 73102).